Reading from the N-terminus, the 357-residue chain is Nicotinate-nucleotide--dimethylbenzimidazole phosphoribosyltransferase (357 aa).

Glu323 serves as the catalytic Proton acceptor.

Belongs to the CobT family.

The catalysed reaction is 5,6-dimethylbenzimidazole + nicotinate beta-D-ribonucleotide = alpha-ribazole 5'-phosphate + nicotinate + H(+). The protein operates within nucleoside biosynthesis; alpha-ribazole biosynthesis; alpha-ribazole from 5,6-dimethylbenzimidazole: step 1/2. In terms of biological role, catalyzes the synthesis of alpha-ribazole-5'-phosphate from nicotinate mononucleotide (NAMN) and 5,6-dimethylbenzimidazole (DMB). The chain is Nicotinate-nucleotide--dimethylbenzimidazole phosphoribosyltransferase from Nitratidesulfovibrio vulgaris (strain DP4) (Desulfovibrio vulgaris).